The primary structure comprises 673 residues: Forkhead box protein O3 (673 aa).

The interval 1–153 (MAEAPASPAP…SGQPRKCSSR (153 aa)) is disordered. Position 30 is a phosphoserine; by AMPK (Ser30). A Phosphothreonine; by PKB/AKT1 modification is found at Thr32. Residue Lys46 is modified to N6-methyllysine. Over residues 57-68 (IPEEEDDEDDED) the composition is skewed to acidic residues. Over residues 79-89 (IGGGGGSGTLG) the composition is skewed to gly residues. The segment at 80–108 (GGGGGSGTLGSGLLLEDSARVLAPGGQDP) is required for mitochondrial import. At Lys149 the chain carries N6-methyllysine. A DNA-binding region (fork-head) is located at residues 157-251 (WGNLSYADLI…KSGKAPRRRA (95 aa)). Thr179 is modified (phosphothreonine; by AMPK). A Phosphoserine; by STK4/MST1 modification is found at Ser209. Ser215 carries the phosphoserine; by MAPKAPK5 modification. Lys230 is subject to N6-methyllysine. Positions 231–302 (SSWWIINPDG…GSPTSRSSDE (72 aa)) are disordered. N6-acetyllysine is present on Lys242. Residues 242 to 259 (KSGKAPRRRAVSMDNSNK) carry the Nuclear localization signal motif. Ser253 carries the post-translational modification Phosphoserine; by PKB/AKT1 and MAPKAPK5. Positions 261–272 (TKSRGRAAKKKA) are enriched in basic residues. An N6-methyllysine mark is found at Lys262 and Lys271. Phosphoserine occurs at positions 280 and 284. A compositionally biased stretch (polar residues) spans 283–298 (DSPSQLSKWPGSPTSR). Position 290 is an N6-methyllysine (Lys290). Ser294 carries the phosphoserine modification. Phosphoserine; by CaMK2A is present on Ser299. Residues 300–673 (SDELDAWTDF…QASSQSWVPG (374 aa)) form a mediates interaction with CHUK/IKKA and IKBKB/IKKB region. Ser311 bears the Phosphoserine mark. Residue Ser315 is modified to Phosphoserine; by SGK1. A phosphoserine; by AMPK mark is found at Ser399 and Ser413. Lys419 carries the N6-methyllysine modification. Ser421 bears the Phosphoserine mark. The disordered stretch occupies residues 536 to 587 (HQHQTQGALGGSRALSNSVSNMGLSESSSLGSAKHQQQSPVSQSMQTLSDSL). Positions 549 to 582 (ALSNSVSNMGLSESSSLGSAKHQQQSPVSQSMQT) are enriched in polar residues. Ser551 carries the phosphoserine; by MAPKAPK5 modification. Phosphoserine; by AMPK and MAPKAPK5 is present on Ser555. Residues Ser588 and Ser626 each carry the phosphoserine; by AMPK modification. A Phosphoserine; by IKKB modification is found at Ser644.

Upon metabolic stress, forms a complex composed of FOXO3, SIRT3 and mitochondrial RNA polymerase POLRMT; the complex is recruited to mtDNA in a SIRT3-dependent manner. Also forms a complex composed of FOXO3, SIRT3, TFAM and POLRMT. Interacts with SIRT2; the interaction occurs independently of SIRT2 deacetylase activity. Interacts with YWHAB/14-3-3-beta and YWHAZ/14-3-3-zeta, which are required for cytosolic sequestration. Upon oxidative stress, interacts with STK4/MST1, which disrupts interaction with YWHAB/14-3-3-beta and leads to nuclear translocation. Interacts with PIM1. Interacts with DDIT3/CHOP. Interacts (deacetylated form) with SKP2. Interacts with CHUK and IKBKB. Interacts with CAMK2A, CAMK2B and calcineurin A. Interacts with NUPR1; this interaction represses FOXO3 transactivation. In the presence of survival factors such as IGF1, phosphorylated on Thr-32 and Ser-253 by AKT1/PKB. This phosphorylated form then interacts with 14-3-3 proteins and is retained in the cytoplasm. Survival factor withdrawal induces dephosphorylation and promotes translocation to the nucleus where the dephosphorylated protein induces transcription of target genes and triggers apoptosis. Although AKT1/PKB doesn't appear to phosphorylate Ser-315 directly, it may activate other kinases that trigger phosphorylation at this residue. Phosphorylated by STK4/MST1 on Ser-209 upon oxidative stress, which leads to dissociation from YWHAB/14-3-3-beta and nuclear translocation. Phosphorylated by PIM1. Phosphorylation by AMPK leads to the activation of transcriptional activity without affecting subcellular localization. In response to metabolic stress, phosphorylated by AMPK on Ser-30 which mediates FOXO3 mitochondrial translocation. Phosphorylation by MAPKAPK5 promotes nuclear localization and DNA-binding, leading to induction of miR-34b and miR-34c expression, 2 post-transcriptional regulators of MYC that bind to the 3'UTR of MYC transcript and prevent its translation. Phosphorylated by CHUK/IKKA and IKBKB/IKKB. TNF-induced inactivation of FOXO3 requires its phosphorylation at Ser-644 by IKBKB/IKKB which promotes FOXO3 retention in the cytoplasm, polyubiquitination and ubiquitin-mediated proteasomal degradation. May be dephosphorylated by calcineurin A on Ser-299 which abolishes FOXO3 transcriptional activity. In cancer cells, ERK mediated-phosphorylation of Ser-12 is required for mitochondrial translocation of FOXO3 in response to metabolic stress or chemotherapeutic agents. Phosphorylation at Ser-253 promotes its degradation by the proteasome. Dephosphorylation at Ser-253 by protein phosphatase 2A (PPP2CA) promotes its stabilization; interaction with PPP2CA is enhanced by AMBRA1. In terms of processing, deacetylation by SIRT1 or SIRT2 stimulates interaction of FOXO3 with SKP2 and facilitates SCF(SKP2)-mediated FOXO3 ubiquitination and proteasomal degradation. Deacetylation by SIRT2 stimulates FOXO3-mediated transcriptional activity in response to oxidative stress. Deacetylated by SIRT3. Deacetylation by SIRT3 stimulates FOXO3-mediated mtDNA transcriptional activity in response to metabolic stress. Post-translationally, heavily methylated by SET9 which decreases stability, while moderately increasing transcriptional activity. The main methylation site is Lys-271. Methylation doesn't affect subcellular location. Polyubiquitinated. Ubiquitinated by a SCF complex containing SKP2, leading to proteasomal degradation. In terms of processing, the N-terminus is cleaved following import into the mitochondrion. Ubiquitous.

The protein resides in the cytoplasm. Its subcellular location is the cytosol. It is found in the nucleus. It localises to the mitochondrion matrix. The protein localises to the mitochondrion outer membrane. Transcriptional activator that recognizes and binds to the DNA sequence 5'-[AG]TAAA[TC]A-3' and regulates different processes, such as apoptosis and autophagy. Acts as a positive regulator of autophagy in skeletal muscle: in starved cells, enters the nucleus following dephosphorylation and binds the promoters of autophagy genes, such as GABARAP1L, MAP1LC3B and ATG12, thereby activating their expression, resulting in proteolysis of skeletal muscle proteins. Triggers apoptosis in the absence of survival factors, including neuronal cell death upon oxidative stress. Participates in post-transcriptional regulation of MYC: following phosphorylation by MAPKAPK5, promotes induction of miR-34b and miR-34c expression, 2 post-transcriptional regulators of MYC that bind to the 3'UTR of MYC transcript and prevent its translation. In response to metabolic stress, translocates into the mitochondria where it promotes mtDNA transcription. In response to metabolic stress, translocates into the mitochondria where it promotes mtDNA transcription. Also acts as a key regulator of chondrogenic commitment of skeletal progenitor cells in response to lipid availability: when lipids levels are low, translocates to the nucleus and promotes expression of SOX9, which induces chondrogenic commitment and suppresses fatty acid oxidation. Also acts as a key regulator of regulatory T-cells (Treg) differentiation by activating expression of FOXP3. The sequence is that of Forkhead box protein O3 from Homo sapiens (Human).